Reading from the N-terminus, the 263-residue chain is Pyridoxine 5'-phosphate synthase (263 aa).

Asparagine 15 lines the 3-amino-2-oxopropyl phosphate pocket. 17–18 (DH) serves as a coordination point for 1-deoxy-D-xylulose 5-phosphate. Arginine 26 is a 3-amino-2-oxopropyl phosphate binding site. Histidine 51 (proton acceptor) is an active-site residue. Residues arginine 53 and histidine 58 each contribute to the 1-deoxy-D-xylulose 5-phosphate site. Glutamate 78 functions as the Proton acceptor in the catalytic mechanism. Threonine 108 contacts 1-deoxy-D-xylulose 5-phosphate. The Proton donor role is filled by histidine 199. 3-amino-2-oxopropyl phosphate is bound by residues glycine 200 and 221–222 (GH).

This sequence belongs to the PNP synthase family. In terms of assembly, homooctamer; tetramer of dimers.

The protein resides in the cytoplasm. It catalyses the reaction 3-amino-2-oxopropyl phosphate + 1-deoxy-D-xylulose 5-phosphate = pyridoxine 5'-phosphate + phosphate + 2 H2O + H(+). It participates in cofactor biosynthesis; pyridoxine 5'-phosphate biosynthesis; pyridoxine 5'-phosphate from D-erythrose 4-phosphate: step 5/5. Catalyzes the complicated ring closure reaction between the two acyclic compounds 1-deoxy-D-xylulose-5-phosphate (DXP) and 3-amino-2-oxopropyl phosphate (1-amino-acetone-3-phosphate or AAP) to form pyridoxine 5'-phosphate (PNP) and inorganic phosphate. The sequence is that of Pyridoxine 5'-phosphate synthase from Ralstonia nicotianae (strain ATCC BAA-1114 / GMI1000) (Ralstonia solanacearum).